We begin with the raw amino-acid sequence, 156 residues long: Ribosome maturation factor RimP (156 aa).

It belongs to the RimP family.

The protein resides in the cytoplasm. Functionally, required for maturation of 30S ribosomal subunits. In Bacillus velezensis (strain DSM 23117 / BGSC 10A6 / LMG 26770 / FZB42) (Bacillus amyloliquefaciens subsp. plantarum), this protein is Ribosome maturation factor RimP.